The primary structure comprises 308 residues: Glycerol-3-phosphate dehydrogenase [NAD(P)+] (308 aa).

W13, R33, and K81 together coordinate NADPH. The sn-glycerol 3-phosphate site is built by K81 and G109. An NADPH-binding site is contributed by A113. Sn-glycerol 3-phosphate-binding residues include K163, D216, S226, R227, and N228. The active-site Proton acceptor is the K163. NADPH is bound at residue R227. E253 is an NADPH binding site.

The protein belongs to the NAD-dependent glycerol-3-phosphate dehydrogenase family.

It localises to the cytoplasm. The catalysed reaction is sn-glycerol 3-phosphate + NAD(+) = dihydroxyacetone phosphate + NADH + H(+). It carries out the reaction sn-glycerol 3-phosphate + NADP(+) = dihydroxyacetone phosphate + NADPH + H(+). Its pathway is membrane lipid metabolism; glycerophospholipid metabolism. Its function is as follows. Catalyzes the reduction of the glycolytic intermediate dihydroxyacetone phosphate (DHAP) to sn-glycerol 3-phosphate (G3P), the key precursor for phospholipid synthesis. The polypeptide is Glycerol-3-phosphate dehydrogenase [NAD(P)+] (Thermosynechococcus vestitus (strain NIES-2133 / IAM M-273 / BP-1)).